The following is a 284-amino-acid chain: Peflin (284 aa).

The disordered stretch occupies residues 1–111 (MASYPYRQGC…QPGLYGQGGA (111 aa)). A compositionally biased stretch (low complexity) spans 8–26 (QGCPGAAGQAPGAPPGSYY). Repeat copies occupy residues 21–29 (PPGSYYPGP), 31–39 (NSGGQYGSG), 41–49 (PPGGGYGGP), 50–58 (APGGPYGPP), 59–67 (AGGGPYGHP), 76–84 (TPGGPYGGA), 85–92 (APGGPYGQ), 93–100 (PPPSSYGA), and 101–109 (QQPGLYGQG). The segment at 21-109 (PPGSYYPGPP…AQQPGLYGQG (89 aa)) is 9 X 9 AA approximate tandem repeat of [AP]-P-G-G-P-Y-G-G-P-P. Gly residues predominate over residues 34–50 (GQYGSGLPPGGGYGGPA). Over residues 65-75 (GHPNPGMFPSG) the composition is skewed to low complexity. Residues 76–90 (TPGGPYGGAAPGGPY) are compositionally biased toward gly residues. 5 consecutive EF-hand domains span residues 114–149 (NVDPEAYSWFQSVDSDHSGYISMKELKQALVNCNWS), 155–183 (TCLMMINMFDKTKSGRIDVYGFSALWKFI), 181–216 (KFIQQWKNLFQQYDRDRSGSISYTELQQALSQMGYN), 217–253 (LSPQFTQLLVSRYCPRSANPAMQLDRFIQVCTQLQVL), and 254–283 (TEAFREKDTAVQGNIRLSFEDFVTMTASRM). Residues Asp127, Asp129, Ser131, and Tyr133 each contribute to the Ca(2+) site. Lys137 participates in a covalent cross-link: Glycyl lysine isopeptide (Lys-Gly) (interchain with G-Cter in ubiquitin). Residue Glu138 coordinates Ca(2+). Ca(2+) contacts are provided by Asp194, Asp196, Ser198, Ser200, and Glu205. The interval 204 to 284 (TELQQALSQM…FVTMTASRML (81 aa)) is required for interaction with PDCD6.

Heterodimer; heterodimerizes (via the EF-hand 5) with PDCD6. Dissociates from PDCD6 in presence of calcium. Ubiquitinated by the BCR(KLHL12) E3 ubiquitin ligase complex.

The protein resides in the cytoplasm. Its subcellular location is the endoplasmic reticulum. It localises to the membrane. It is found in the cytoplasmic vesicle. The protein localises to the COPII-coated vesicle membrane. Its function is as follows. Calcium-binding protein that acts as an adapter that bridges unrelated proteins or stabilizes weak protein-protein complexes in response to calcium. Together with PDCD6, acts as a calcium-dependent adapter for the BCR(KLHL12) complex, a complex involved in endoplasmic reticulum (ER)-Golgi transport by regulating the size of COPII coats. In response to cytosolic calcium increase, the heterodimer formed with PDCD6 interacts with, and bridges together the BCR(KLHL12) complex and SEC31 (SEC31A or SEC31B), promoting monoubiquitination of SEC31 and subsequent collagen export, which is required for neural crest specification. Its role in the heterodimer formed with PDCD6 is however unclear: some evidence shows that PEF1 and PDCD6 work together and promote association between PDCD6 and SEC31 in presence of calcium. Other reports show that PEF1 dissociates from PDCD6 in presence of calcium, and may act as a negative regulator of PDCD6. Also acts as a negative regulator of ER-Golgi transport; possibly by inhibiting interaction between PDCD6 and SEC31. The sequence is that of Peflin from Homo sapiens (Human).